A 504-amino-acid polypeptide reads, in one-letter code: MTSLISVKNLSKSFPGVKALDQVHFDLRAGEVHALMGENGAGKSTLMKILAGVYRKDSGEMLLDGQPVEIESPAHAQSLAIGIVHQELHLMNHLTAAQNIYLGREPRHCGGLFLDEARLNQDTQILFDRLNLALAPTTAIGELTVARQQMVEIAKALSFKSRVLIMDEPTAALNNAEIDELFRIIRQLKSEGVGIVYISHKMDEIQRIADRITVMRDGSTIGTVPASTPMQQVIAMMVGRNLEQAEKHIPDTSANEVLLEVRGLNRGRVIRDVNFSVRRGEILGFAGLMGAGRTEVARAVFGADPIDSGEVRVRGELIRLASPQDAVQAGIGYLSEDRKHFGLATGMDVESNITLPSLKRWLKWGLFLNQPAIHHISQQMVGKLRIKTPSLTQTARLLSGGNQQKVVVAKWLVQDCDVLIFDEPTRGIDVGAKSEIYKLLNELATQGKAIIVISSELPEVLLLSHRVLVMCEGRITGEVAGDVATQETLMALATRRESLASTVH.

ABC transporter domains lie at Ile-5–Leu-242 and Thr-252–Glu-497. Gly-37–Ser-44 serves as a coordination point for ATP.

This sequence belongs to the ABC transporter superfamily. Carbohydrate importer 2 (CUT2) (TC 3.A.1.2) family.

It localises to the cell inner membrane. The enzyme catalyses D-ribose(out) + ATP + H2O = D-ribose(in) + ADP + phosphate + H(+). The catalysed reaction is D-galactose(out) + ATP + H2O = D-galactose(in) + ADP + phosphate + H(+). Functionally, part of an ABC transporter complex involved in carbohydrate import. Could be involved in ribose, galactose and/or methyl galactoside import. Responsible for energy coupling to the transport system. The chain is Putative ribose/galactose/methyl galactoside import ATP-binding protein from Albidiferax ferrireducens (strain ATCC BAA-621 / DSM 15236 / T118) (Rhodoferax ferrireducens).